Here is a 506-residue protein sequence, read N- to C-terminus: ATP synthase subunit alpha (506 aa).

An ATP-binding site is contributed by 171–178 (GDRQTGKT).

The protein belongs to the ATPase alpha/beta chains family. In terms of assembly, F-type ATPases have 2 components, CF(1) - the catalytic core - and CF(0) - the membrane proton channel. CF(1) has five subunits: alpha(3), beta(3), gamma(1), delta(1), epsilon(1). CF(0) has four main subunits: a(1), b(1), b'(1) and c(9-12).

Its subcellular location is the cellular thylakoid membrane. It catalyses the reaction ATP + H2O + 4 H(+)(in) = ADP + phosphate + 5 H(+)(out). Its function is as follows. Produces ATP from ADP in the presence of a proton gradient across the membrane. The alpha chain is a regulatory subunit. The chain is ATP synthase subunit alpha from Nostoc sp. (strain PCC 7120 / SAG 25.82 / UTEX 2576).